Here is a 362-residue protein sequence, read N- to C-terminus: Cobalt-precorrin-5B C(1)-methyltransferase (362 aa).

This sequence belongs to the CbiD family.

The enzyme catalyses Co-precorrin-5B + S-adenosyl-L-methionine = Co-precorrin-6A + S-adenosyl-L-homocysteine. It functions in the pathway cofactor biosynthesis; adenosylcobalamin biosynthesis; cob(II)yrinate a,c-diamide from sirohydrochlorin (anaerobic route): step 6/10. Functionally, catalyzes the methylation of C-1 in cobalt-precorrin-5B to form cobalt-precorrin-6A. This is Cobalt-precorrin-5B C(1)-methyltransferase from Desulfotalea psychrophila (strain LSv54 / DSM 12343).